Reading from the N-terminus, the 490-residue chain is Membrane-bound lytic murein transglycosylase F (490 aa).

Positions 1 to 32 (MFALTAYRLRCAAWLLATGIFLLLAGCSEAKA) are cleaved as a signal peptide. Positions 33-269 (PTALERVQKE…RLKDRYYGHV (237 aa)) are non-LT domain. The interval 270–490 (DVLGYVGAYT…PEEDSGDEKL (221 aa)) is LT domain. E316 is a catalytic residue. The segment at 467 to 490 (AESGLHLPGVNKTRPEEDSGDEKL) is disordered. Basic and acidic residues predominate over residues 479 to 490 (TRPEEDSGDEKL).

It in the N-terminal section; belongs to the bacterial solute-binding protein 3 family. In the C-terminal section; belongs to the transglycosylase Slt family.

It localises to the cell outer membrane. It carries out the reaction Exolytic cleavage of the (1-&gt;4)-beta-glycosidic linkage between N-acetylmuramic acid (MurNAc) and N-acetylglucosamine (GlcNAc) residues in peptidoglycan, from either the reducing or the non-reducing ends of the peptidoglycan chains, with concomitant formation of a 1,6-anhydrobond in the MurNAc residue.. In terms of biological role, murein-degrading enzyme that degrades murein glycan strands and insoluble, high-molecular weight murein sacculi, with the concomitant formation of a 1,6-anhydromuramoyl product. Lytic transglycosylases (LTs) play an integral role in the metabolism of the peptidoglycan (PG) sacculus. Their lytic action creates space within the PG sacculus to allow for its expansion as well as for the insertion of various structures such as secretion systems and flagella. The polypeptide is Membrane-bound lytic murein transglycosylase F (Pseudomonas aeruginosa (strain ATCC 15692 / DSM 22644 / CIP 104116 / JCM 14847 / LMG 12228 / 1C / PRS 101 / PAO1)).